Consider the following 141-residue polypeptide: Holo-[acyl-carrier-protein] synthase (141 aa).

Mg(2+) contacts are provided by aspartate 8 and glutamate 63.

This sequence belongs to the P-Pant transferase superfamily. AcpS family. It depends on Mg(2+) as a cofactor.

The protein resides in the cytoplasm. It catalyses the reaction apo-[ACP] + CoA = holo-[ACP] + adenosine 3',5'-bisphosphate + H(+). Functionally, transfers the 4'-phosphopantetheine moiety from coenzyme A to a Ser of acyl-carrier-protein. This is Holo-[acyl-carrier-protein] synthase from Rhodospirillum centenum (strain ATCC 51521 / SW).